Here is a 1135-residue protein sequence, read N- to C-terminus: MFELNNFDALQIGLASPEKIREWSRGEVKKPETINYRTLKPERDGLFCERIFGPTKDWECHCGKYKRVRYKGIVCDRCGVEVTKSKVRRERMGHIELAAPVSHIWYFKGIPSRMGLMLDMSPRSLEKVLYFASYIVIDPKETPLLKKQLLNEKEYREAIENYGEEGFVAGMGAESVQKLLEEIDLNQVSKELKEALKTSTGQKKIRLIRRLEAVESFRKSSNRPDWMIIDVIPVIPPDLRPMVQLDGGRFATSDLNDLYRRVINRNNRLKKLLDLGAPDIIVRNEKRMLQEAVDALIDNGRRGRPVTGPGNRPLKSLSDMLKGKQGRFRQNLLGKRVDYSGRSVIVVGPELKMYQCGLPKEMALELFKPFVMKKLVQGGLSHNIKSAKRMVERVQSEVWDVLEEVISDHPVLLNRAPTLHRLGIQAFQPVLVEGRAIKLHPLVCTAYNADFDGDQMAVHLPLSVEAQAEARFLMLAAHNILKPSDGKPVCVPTQDMVLGSYYLTLDKENAIGEGRIFSSPEEAIMAYQIGDIDIHAHIKVRISKEVDGEEVCGIIDCTPGKLIFNESIPQDLGFVDRSVPGNEVKLEVDFLINKSSLGKLINKCYMKHGPTKTSIMLDKIKEKGYHYSTIGAITVSTSDMVVPEAKKRLLAETDVEVNKIDKMYRRGFISEDERYERVIEKWTKTTDLVADELMKNLDRFNPIFMMADSGARGSKSQIKQLAGMRGLMANPSGKIIELPIRASFREGLDVSEYFISTHGARKGNADTALKTADSGYLTRRLVDVSQDVIVREEDCGSKEGFEISEIREGNEIIEPLSERLTGRYSAEDIIDPNTGEILVKKEEYIDGEKAEEVEKSGVKKIKIRSVFTCKSKHGVCAKCYGMNMATAEKINIGESVGIIAAQSIGEPGTQLTMRTFHTGGVAGSDITQGLPRVEELFEARKPKGLAIVSEINGTIRIDETKKKRTVVVIGETEEISYDIPFGSRLKVSNGDVISAGDEITEGSVNPHDVLRIKGPNGVKNYLLSEVQKVYRLQGVDINDKHLEVVVRQMTRKIKIEESGDTEFLPGTMVDIFDFQEENAKAEEEGKETAKGRITLLGITKAALATDSFLSSASFQETTRVLTDAAIKGKVDPLLG.

Cysteine 60, cysteine 62, cysteine 75, and cysteine 78 together coordinate Zn(2+). Positions 450, 452, and 454 each coordinate Mg(2+). Zn(2+) is bound by residues cysteine 795, cysteine 869, cysteine 876, and cysteine 879.

Belongs to the RNA polymerase beta' chain family. The RNAP catalytic core consists of 2 alpha, 1 beta, 1 beta' and 1 omega subunit. When a sigma factor is associated with the core the holoenzyme is formed, which can initiate transcription. The cofactor is Mg(2+). It depends on Zn(2+) as a cofactor.

It carries out the reaction RNA(n) + a ribonucleoside 5'-triphosphate = RNA(n+1) + diphosphate. Functionally, DNA-dependent RNA polymerase catalyzes the transcription of DNA into RNA using the four ribonucleoside triphosphates as substrates. This chain is DNA-directed RNA polymerase subunit beta', found in Clostridium tetani (strain Massachusetts / E88).